Here is a 320-residue protein sequence, read N- to C-terminus: Protein LATERAL ROOT PRIMORDIUM 1 (320 aa).

A disordered region spans residues 90–110 (QTTVGTSSNNSGSGSGASGTA). Residues cysteine 112, cysteine 115, cysteine 123, cysteine 128, cysteine 132, and cysteine 139 each contribute to the Zn(2+) site. Positions 112 to 139 (CQDCGNQAKKECKQRRCRTCCKSRGFDC) form a DNA-binding region, zn(2)-C6 fungal-type; degenerate. The interval 150-223 (AARRRERQVM…QDGGGSREAW (74 aa)) is disordered. Over residues 168–177 (GSSLSTSSGT) the composition is skewed to low complexity. The span at 193 to 214 (ATSHTSTSNTPPQSFETSSSRQ) shows a compositional bias: polar residues. The short motif at 256–259 (IGGH) is the Required for homo- and heterodimerization element.

It belongs to the SHI protein family. In terms of assembly, homodimer. Restricted to lateral root primordia.

The protein resides in the nucleus. Its function is as follows. Transcription activator that binds DNA on 5'-ACTCTAC-3' and promotes auxin homeostasis-regulating gene expression (e.g. YUC genes), as well as genes affecting stamen development, cell expansion and timing of flowering. Synergistically with other SHI-related proteins, regulates gynoecium, stamen and leaf development in a dose-dependent manner, controlling apical-basal patterning. Promotes style and stigma formation, and influence vascular development during gynoecium development. May also have a role in the formation and/or maintenance of the shoot apical meristem (SAM). Modulates root growth. The protein is Protein LATERAL ROOT PRIMORDIUM 1 (LRP1) of Arabidopsis thaliana (Mouse-ear cress).